A 182-amino-acid polypeptide reads, in one-letter code: Probable nicotinate-nucleotide adenylyltransferase (182 aa).

This sequence belongs to the NadD family.

It catalyses the reaction nicotinate beta-D-ribonucleotide + ATP + H(+) = deamido-NAD(+) + diphosphate. Its pathway is cofactor biosynthesis; NAD(+) biosynthesis; deamido-NAD(+) from nicotinate D-ribonucleotide: step 1/1. Catalyzes the reversible adenylation of nicotinate mononucleotide (NaMN) to nicotinic acid adenine dinucleotide (NaAD). This Aliarcobacter butzleri (strain RM4018) (Arcobacter butzleri) protein is Probable nicotinate-nucleotide adenylyltransferase.